The primary structure comprises 1444 residues: RNA-directed RNA polymerase P1 (1444 aa).

The segment at 156–182 (SEEIQMDESQSDKRRRKKRMEKSRPVW) is disordered. Residues 690 to 897 (LGVGFATLYQ…KTVISHISGE (208 aa)) enclose the RdRp catalytic domain.

The protein belongs to the reoviridae RNA-directed RNA polymerase family.

The protein resides in the virion. It is found in the host cytoplasm. The catalysed reaction is RNA(n) + a ribonucleoside 5'-triphosphate = RNA(n+1) + diphosphate. Its function is as follows. RNA-directed RNA polymerase that is involved in both transcription and genome replication. Together with the capping enzyme P5 and protein P7, forms an enzyme complex positioned near the channels situated at each of the five-fold vertices of the core. The sequence is that of RNA-directed RNA polymerase P1 (S1) from Rice dwarf virus (isolate Fujian) (RDV).